The sequence spans 115 residues: DNA-directed RNA polymerase II subunit RPB11-b1 (115 aa).

The protein belongs to the archaeal Rpo11/eukaryotic RPB11/RPC19 RNA polymerase subunit family. In terms of assembly, component of the RNA polymerase II (Pol II) complex consisting of 12 subunits. As to expression, ubiquitously expressed.

It localises to the nucleus. DNA-dependent RNA polymerase catalyzes the transcription of DNA into RNA using the four ribonucleoside triphosphates as substrates. Component of RNA polymerase II which synthesizes mRNA precursors and many functional non-coding RNAs. Pol II is the central component of the basal RNA polymerase II transcription machinery. It is composed of mobile elements that move relative to each other. RPB11 is part of the core element with the central large cleft. The polypeptide is DNA-directed RNA polymerase II subunit RPB11-b1 (POLR2J2) (Homo sapiens (Human)).